Here is a 330-residue protein sequence, read N- to C-terminus: Beta-hexosaminidase (330 aa).

Substrate is bound by residues aspartate 62, arginine 70, arginine 130, and 160–161 (KH). Histidine 173 functions as the Proton donor/acceptor in the catalytic mechanism. Aspartate 242 serves as the catalytic Nucleophile.

The protein belongs to the glycosyl hydrolase 3 family. NagZ subfamily. As to quaternary structure, monomer.

It localises to the cytoplasm. The catalysed reaction is Hydrolysis of terminal non-reducing N-acetyl-D-hexosamine residues in N-acetyl-beta-D-hexosaminides.. It functions in the pathway cell wall biogenesis; peptidoglycan recycling. Functionally, plays a role in peptidoglycan recycling by cleaving the terminal beta-1,4-linked N-acetylglucosamine (GlcNAc) from peptide-linked peptidoglycan fragments, giving rise to free GlcNAc, anhydro-N-acetylmuramic acid and anhydro-N-acetylmuramic acid-linked peptides. Plays a role in beta-lactam antibiotic resistance via its role in generating anhydro-N-acetylmuramic acid-linked peptides; these peptides function as signaling molecules that induce high-level expression of the beta-lactamase AmpC. This chain is Beta-hexosaminidase, found in Vibrio cholerae serotype O1 (strain ATCC 39315 / El Tor Inaba N16961).